Here is a 394-residue protein sequence, read N- to C-terminus: Major outer membrane porin, serovar B (394 aa).

Positions 1-22 (MKKLLKSVLVFAALSSASSLQA) are cleaved as a signal peptide.

The protein belongs to the chlamydial porin (CP) (TC 1.B.2) family. As to quaternary structure, part of a disulfide cross-linked outer membrane complex (COMC) composed of the major outer membrane porin (MOMP), the small cysteine-rich protein (OmcA) and the large cysteine-rich periplasmic protein (OmcB).

The protein resides in the cell outer membrane. In terms of biological role, in elementary bodies (EBs, the infectious stage, which is able to survive outside the host cell) provides the structural integrity of the outer envelope through disulfide cross-links with the small cysteine-rich protein and the large cysteine-rich periplasmic protein. It has been described in publications as the Sarkosyl-insoluble COMC (Chlamydia outer membrane complex), and serves as the functional equivalent of peptidoglycan. Functionally, permits diffusion of specific solutes through the outer membrane. The polypeptide is Major outer membrane porin, serovar B (ompA) (Chlamydia trachomatis).